A 688-amino-acid chain; its full sequence is Protein adenylyltransferase SelO, mitochondrial (688 aa).

Residues 1–23 constitute a mitochondrion transit peptide; it reads MGEKRTIIKALKNSAASHFIKKL. The ATP site is built by Gly-132, Gly-134, Arg-135, Lys-156, Asp-168, Gly-169, Arg-220, and Arg-227. Residue Asp-338 is the Proton acceptor of the active site. Mg(2+)-binding residues include Asn-339 and Asp-348. ATP is bound at residue Asp-348.

The protein belongs to the SELO family. Requires Mg(2+) as cofactor. In terms of processing, forms probably one or more intrachain disulfide bridges.

The protein resides in the mitochondrion. The catalysed reaction is L-tyrosyl-[protein] + ATP = O-(5'-adenylyl)-L-tyrosyl-[protein] + diphosphate. Its function is as follows. Catalyzes the transfer of adenosine 5'-monophosphate (AMP) to Tyr residues of target mitochondrial proteins (AMPylation). Involved in redox homeostasis by regulating the cellular response to oxidative stress. Regulates protein S-glutathionylation levels possibly by AMPylation of deglutathionylation enzymes such as glutaredoxins. The chain is Protein adenylyltransferase SelO, mitochondrial from Saccharomyces cerevisiae (strain ATCC 204508 / S288c) (Baker's yeast).